The primary structure comprises 721 residues: Oviduct-specific glycoprotein (721 aa).

The N-terminal stretch at 1–21 is a signal peptide; that stretch reads MGRLLLLAGLVLLMKHSDGTA. Positions 22 to 385 constitute a GH18 domain; that stretch reads YKLVCYFTNW…HILNELLVQT (364 aa). Cys-26 and Cys-51 form a disulfide bridge. Residues 71–72, 98–101, Tyr-142, 211–214, and Trp-355 contribute to the chitin site; these read LQ, GGWN, and LSYD. Asn-402 and Asn-442 each carry an N-linked (GlcNAc...) asparagine glycan. Positions 444–456 are enriched in polar residues; that stretch reads TTVPSDGSVTPGG. A disordered region spans residues 444–465; sequence TTVPSDGSVTPGGTASPRKHAV. Asn-469 carries an N-linked (GlcNAc...) asparagine glycan. 21 repeat units span residues 486–492, 493–499, 500–506, 507–513, 514–520, 521–527, 528–534, 535–541, 542–548, 549–555, 556–562, 563–569, 570–576, 577–583, 584–590, 591–597, 598–604, 605–611, 612–618, 619–625, and 626–632. The tract at residues 486–632 is 21 X 7 AA tandem repeats of S-K-[TAI]-[TI]-[TAP]-[GED]-[IVM]; it reads SKTTTGVSKT…PGISKTTPGM (147 aa).

The protein belongs to the glycosyl hydrolase 18 family. In terms of tissue distribution, epithelial cells of the oviduct.

Its subcellular location is the cytoplasmic vesicle. The protein resides in the secretory vesicle. In terms of biological role, binds to oocyte zona pellucida in vivo. May play a role in the fertilization process and/or early embryonic development. In Mus musculus (Mouse), this protein is Oviduct-specific glycoprotein (Ovgp1).